Consider the following 129-residue polypeptide: Glycine cleavage system H protein (129 aa).

One can recognise a Lipoyl-binding domain in the interval Ser24 to Met106. Lys65 bears the N6-lipoyllysine mark.

The protein belongs to the GcvH family. In terms of assembly, the glycine cleavage system is composed of four proteins: P, T, L and H. (R)-lipoate serves as cofactor.

The glycine cleavage system catalyzes the degradation of glycine. The H protein shuttles the methylamine group of glycine from the P protein to the T protein. In Shewanella sediminis (strain HAW-EB3), this protein is Glycine cleavage system H protein.